The chain runs to 115 residues: NAD(P)H-quinone oxidoreductase subunit M (115 aa).

Belongs to the complex I NdhM subunit family. NDH-1 can be composed of about 15 different subunits; different subcomplexes with different compositions have been identified which probably have different functions.

It is found in the cellular thylakoid membrane. It catalyses the reaction a plastoquinone + NADH + (n+1) H(+)(in) = a plastoquinol + NAD(+) + n H(+)(out). The catalysed reaction is a plastoquinone + NADPH + (n+1) H(+)(in) = a plastoquinol + NADP(+) + n H(+)(out). In terms of biological role, NDH-1 shuttles electrons from an unknown electron donor, via FMN and iron-sulfur (Fe-S) centers, to quinones in the respiratory and/or the photosynthetic chain. The immediate electron acceptor for the enzyme in this species is believed to be plastoquinone. Couples the redox reaction to proton translocation, and thus conserves the redox energy in a proton gradient. Cyanobacterial NDH-1 also plays a role in inorganic carbon-concentration. The protein is NAD(P)H-quinone oxidoreductase subunit M of Synechococcus sp. (strain CC9902).